A 231-amino-acid chain; its full sequence is Lactate utilization protein C (231 aa).

This sequence belongs to the LutC/YkgG family.

In terms of biological role, is involved in L-lactate degradation and allows cells to grow with lactate as the sole carbon source. In Macrococcus caseolyticus (strain JCSC5402) (Macrococcoides caseolyticum), this protein is Lactate utilization protein C.